We begin with the raw amino-acid sequence, 291 residues long: Porphobilinogen deaminase (291 aa).

Cys-233 is modified (S-(dipyrrolylmethanemethyl)cysteine).

Belongs to the HMBS family. In terms of assembly, monomer. It depends on dipyrromethane as a cofactor.

The enzyme catalyses 4 porphobilinogen + H2O = hydroxymethylbilane + 4 NH4(+). It participates in porphyrin-containing compound metabolism; protoporphyrin-IX biosynthesis; coproporphyrinogen-III from 5-aminolevulinate: step 2/4. Its function is as follows. Tetrapolymerization of the monopyrrole PBG into the hydroxymethylbilane pre-uroporphyrinogen in several discrete steps. The polypeptide is Porphobilinogen deaminase (hemC) (Ruminiclostridium josui (Clostridium josui)).